A 521-amino-acid chain; its full sequence is Probable protein phosphatase 2C 16 (521 aa).

The 307-residue stretch at 21–327 (KYVVSSMQGW…ENTTVILVQF (307 aa)) folds into the PPM-type phosphatase domain. Residues D57, G58, Q276, and E318 each contribute to the Mn(2+) site. The disordered stretch occupies residues 354–431 (AAPAGASDTS…ADADDGAPKP (78 aa)).

This sequence belongs to the PP2C family. Mg(2+) is required as a cofactor. It depends on Mn(2+) as a cofactor.

It catalyses the reaction O-phospho-L-seryl-[protein] + H2O = L-seryl-[protein] + phosphate. The enzyme catalyses O-phospho-L-threonyl-[protein] + H2O = L-threonyl-[protein] + phosphate. The chain is Probable protein phosphatase 2C 16 from Oryza sativa subsp. japonica (Rice).